Here is a 1146-residue protein sequence, read N- to C-terminus: Nucleolar protein 6 (1146 aa).

Residues Met1–Gly48 form a disordered region. Position 56 is a phosphoserine (Ser56). Residues Leu83–Gln114 adopt a coiled-coil conformation. Phosphoserine occurs at positions 283, 289, and 811.

This sequence belongs to the NRAP family. As to quaternary structure, part of the small subunit (SSU) processome, composed of more than 70 proteins and the RNA chaperone small nucleolar RNA (snoRNA) U3. Interacts with RRP7A; required for NOL6 localization to nucleolus.

The protein localises to the nucleus. It localises to the nucleolus. Its subcellular location is the chromosome. Part of the small subunit (SSU) processome, first precursor of the small eukaryotic ribosomal subunit. During the assembly of the SSU processome in the nucleolus, many ribosome biogenesis factors, an RNA chaperone and ribosomal proteins associate with the nascent pre-rRNA and work in concert to generate RNA folding, modifications, rearrangements and cleavage as well as targeted degradation of pre-ribosomal RNA by the RNA exosome. The sequence is that of Nucleolar protein 6 from Homo sapiens (Human).